The chain runs to 233 residues: Large ribosomal subunit protein uL1 (233 aa).

The protein belongs to the universal ribosomal protein uL1 family. In terms of assembly, part of the 50S ribosomal subunit.

Binds directly to 23S rRNA. The L1 stalk is quite mobile in the ribosome, and is involved in E site tRNA release. In terms of biological role, protein L1 is also a translational repressor protein, it controls the translation of the L11 operon by binding to its mRNA. The protein is Large ribosomal subunit protein uL1 of Vibrio parahaemolyticus serotype O3:K6 (strain RIMD 2210633).